The chain runs to 688 residues: DNA-directed RNA polymerase subunit beta' (688 aa).

Residues C69, C71, C87, and C90 each coordinate Zn(2+). D493, D495, and D497 together coordinate Mg(2+).

The protein belongs to the RNA polymerase beta' chain family. RpoC1 subfamily. In plastids the minimal PEP RNA polymerase catalytic core is composed of four subunits: alpha, beta, beta', and beta''. When a (nuclear-encoded) sigma factor is associated with the core the holoenzyme is formed, which can initiate transcription. The cofactor is Mg(2+). Requires Zn(2+) as cofactor.

It localises to the plastid. The protein localises to the chloroplast. It catalyses the reaction RNA(n) + a ribonucleoside 5'-triphosphate = RNA(n+1) + diphosphate. In terms of biological role, DNA-dependent RNA polymerase catalyzes the transcription of DNA into RNA using the four ribonucleoside triphosphates as substrates. In Chloranthus spicatus (Chulantree), this protein is DNA-directed RNA polymerase subunit beta'.